A 156-amino-acid polypeptide reads, in one-letter code: Peptide deformylase (156 aa).

Fe cation contacts are provided by Cys-90 and His-132. The active site involves Glu-133. His-136 contributes to the Fe cation binding site.

It belongs to the polypeptide deformylase family. Fe(2+) is required as a cofactor.

It catalyses the reaction N-terminal N-formyl-L-methionyl-[peptide] + H2O = N-terminal L-methionyl-[peptide] + formate. Functionally, removes the formyl group from the N-terminal Met of newly synthesized proteins. Requires at least a dipeptide for an efficient rate of reaction. N-terminal L-methionine is a prerequisite for activity but the enzyme has broad specificity at other positions. The polypeptide is Peptide deformylase (Natranaerobius thermophilus (strain ATCC BAA-1301 / DSM 18059 / JW/NM-WN-LF)).